A 303-amino-acid chain; its full sequence is RING finger protein 148 (303 aa).

The signal sequence occupies residues 1-34 (MSLLRITSSAHSSASSRLWRLGIFLLLSLPDSKG). N-linked (GlcNAc...) asparagine glycosylation occurs at asparagine 43. Residues 65–167 (HSPLERVSGV…LKGMELLHLI (103 aa)) form the PA domain. A helical membrane pass occupies residues 186–208 (WLSHYIMSLFTFLTATVAYLFLY). The RING-type; atypical zinc finger occupies 256–297 (CVVCFDIYKPQDVVRILTCKHIFHKACIDPWLLAHRTCPMCK).

It localises to the membrane. The chain is RING finger protein 148 (RNF148) from Bos taurus (Bovine).